The sequence spans 390 residues: Chorismate synthase 1 (390 aa).

NADP(+)-binding residues include Arg39 and Arg45. The interval 95–117 (EQEEKEMKRKVTKPRPGHADLNG) is disordered. Residues 132–134 (RSS), 253–254 (NA), Gly298, 313–317 (KPIPT), and Arg339 contribute to the FMN site.

Belongs to the chorismate synthase family. As to quaternary structure, homotetramer. FMNH2 is required as a cofactor.

It carries out the reaction 5-O-(1-carboxyvinyl)-3-phosphoshikimate = chorismate + phosphate. It functions in the pathway metabolic intermediate biosynthesis; chorismate biosynthesis; chorismate from D-erythrose 4-phosphate and phosphoenolpyruvate: step 7/7. Its function is as follows. Catalyzes the anti-1,4-elimination of the C-3 phosphate and the C-6 proR hydrogen from 5-enolpyruvylshikimate-3-phosphate (EPSP) to yield chorismate, which is the branch point compound that serves as the starting substrate for the three terminal pathways of aromatic amino acid biosynthesis. This reaction introduces a second double bond into the aromatic ring system. The polypeptide is Chorismate synthase 1 (Bacillus cereus (strain ATCC 14579 / DSM 31 / CCUG 7414 / JCM 2152 / NBRC 15305 / NCIMB 9373 / NCTC 2599 / NRRL B-3711)).